We begin with the raw amino-acid sequence, 810 residues long: LPS-assembly protein LptD (810 aa).

A signal peptide spans methionine 1–alanine 29.

This sequence belongs to the LptD family. Component of the lipopolysaccharide transport and assembly complex. Interacts with LptE and LptA.

It localises to the cell outer membrane. In terms of biological role, together with LptE, is involved in the assembly of lipopolysaccharide (LPS) at the surface of the outer membrane. The sequence is that of LPS-assembly protein LptD from Aeromonas hydrophila subsp. hydrophila (strain ATCC 7966 / DSM 30187 / BCRC 13018 / CCUG 14551 / JCM 1027 / KCTC 2358 / NCIMB 9240 / NCTC 8049).